Reading from the N-terminus, the 149-residue chain is Calmodulin-1 (149 aa).

At A2 the chain carries N-acetylalanine. 4 EF-hand domains span residues 8-43 (DQIS…LGQN), 44-79 (PTEA…KMKD), 81-116 (DSEE…LGEK), and 117-149 (LTDE…MMAK). Ca(2+) contacts are provided by D21, D23, D25, C27, E32, D57, D59, N61, T63, E68, D94, D96, N98, and E105. The residue at position 116 (K116) is an N6,N6,N6-trimethyllysine. Residues D130, D132, D134, Q136, and E141 each contribute to the Ca(2+) site.

This sequence belongs to the calmodulin family.

Calmodulin mediates the control of a large number of enzymes, ion channels and other proteins by Ca(2+). Among the enzymes to be stimulated by the calmodulin-Ca(2+) complex are a number of protein kinases and phosphatases. This is Calmodulin-1 (CAM81) from Petunia hybrida (Petunia).